A 171-amino-acid chain; its full sequence is Alpha-amylase/trypsin inhibitor CMd (171 aa).

An N-terminal signal peptide occupies residues methionine 1 to alanine 24.

The protein belongs to the protease inhibitor I6 (cereal trypsin/alpha-amylase inhibitor) family. Heterotetramer of one CMa, one CMb and two CMd chains. In terms of processing, five disulfide bonds, which are essential for the inhibitor activity, are probably present. Endosperm.

It is found in the secreted. Functionally, part of a complex with inhibitory activity, but CMd is inactive as a separate subunit. This chain is Alpha-amylase/trypsin inhibitor CMd (IAT3), found in Hordeum vulgare (Barley).